A 388-amino-acid chain; its full sequence is Succinate--CoA ligase [ADP-forming] subunit beta (388 aa).

The 236-residue stretch at K9 to H244 folds into the ATP-grasp domain. Residues K46, G53–G55, E99, T102, and E107 each bind ATP. Mg(2+) contacts are provided by N199 and D213. Residues N264 and G321–V323 each bind substrate.

Belongs to the succinate/malate CoA ligase beta subunit family. Heterotetramer of two alpha and two beta subunits. The cofactor is Mg(2+).

It catalyses the reaction succinate + ATP + CoA = succinyl-CoA + ADP + phosphate. The catalysed reaction is GTP + succinate + CoA = succinyl-CoA + GDP + phosphate. It participates in carbohydrate metabolism; tricarboxylic acid cycle; succinate from succinyl-CoA (ligase route): step 1/1. In terms of biological role, succinyl-CoA synthetase functions in the citric acid cycle (TCA), coupling the hydrolysis of succinyl-CoA to the synthesis of either ATP or GTP and thus represents the only step of substrate-level phosphorylation in the TCA. The beta subunit provides nucleotide specificity of the enzyme and binds the substrate succinate, while the binding sites for coenzyme A and phosphate are found in the alpha subunit. This Shewanella frigidimarina (strain NCIMB 400) protein is Succinate--CoA ligase [ADP-forming] subunit beta.